A 203-amino-acid polypeptide reads, in one-letter code: Regulator of free ubiquitin chains 1 (203 aa).

The protein belongs to the RFU1 family.

The protein localises to the endosome. Functionally, inhibitor of the DOA4 deubiquitinase involved in the regulation of protein degradation by the proteasome and maintenance of a normal level of free ubiquitin. This Candida glabrata (strain ATCC 2001 / BCRC 20586 / JCM 3761 / NBRC 0622 / NRRL Y-65 / CBS 138) (Yeast) protein is Regulator of free ubiquitin chains 1 (RFU1).